A 337-amino-acid polypeptide reads, in one-letter code: Ketol-acid reductoisomerase (NADP(+)) (337 aa).

The KARI N-terminal Rossmann domain maps to 3 to 183 (IDVFYDDDAD…GGGRAGVIPT (181 aa)). Residues 26–29 (YGSQ), R49, S52, S54, and 84–87 (DTSQ) each bind NADP(+). The active site involves H109. G135 contacts NADP(+). The region spanning 184–329 (TFEAETVTDL…EKLRDLMSWV (146 aa)) is the KARI C-terminal knotted domain. Positions 192, 196, 228, and 232 each coordinate Mg(2+). S253 is a substrate binding site.

This sequence belongs to the ketol-acid reductoisomerase family. Requires Mg(2+) as cofactor.

The catalysed reaction is (2R)-2,3-dihydroxy-3-methylbutanoate + NADP(+) = (2S)-2-acetolactate + NADPH + H(+). It catalyses the reaction (2R,3R)-2,3-dihydroxy-3-methylpentanoate + NADP(+) = (S)-2-ethyl-2-hydroxy-3-oxobutanoate + NADPH + H(+). Its pathway is amino-acid biosynthesis; L-isoleucine biosynthesis; L-isoleucine from 2-oxobutanoate: step 2/4. It participates in amino-acid biosynthesis; L-valine biosynthesis; L-valine from pyruvate: step 2/4. Involved in the biosynthesis of branched-chain amino acids (BCAA). Catalyzes an alkyl-migration followed by a ketol-acid reduction of (S)-2-acetolactate (S2AL) to yield (R)-2,3-dihydroxy-isovalerate. In the isomerase reaction, S2AL is rearranged via a Mg-dependent methyl migration to produce 3-hydroxy-3-methyl-2-ketobutyrate (HMKB). In the reductase reaction, this 2-ketoacid undergoes a metal-dependent reduction by NADPH to yield (R)-2,3-dihydroxy-isovalerate. This is Ketol-acid reductoisomerase (NADP(+)) from Corynebacterium urealyticum (strain ATCC 43042 / DSM 7109).